The sequence spans 515 residues: UDP-glucosyltransferase 2 (515 aa).

A signal peptide spans 1–20 (MEFRLLILALFSVLMSTSNG). Residues 21–471 (AEILALFPIH…TAGAFLHWYQ (451 aa)) are Lumenal-facing. 3 N-linked (GlcNAc...) asparagine glycosylation sites follow: Asn-51, Asn-236, and Asn-303. Residues 472–492 (YLLLDVITFLLVTFCAFCFIV) form a helical membrane-spanning segment. At 493–515 (KYICKALIHHYWSSSKSEKLKKN) the chain is on the cytoplasmic side.

It belongs to the UDP-glycosyltransferase family. In terms of processing, glycosylated.

Its subcellular location is the endoplasmic reticulum membrane. It catalyses the reaction kermesate + UDP-alpha-D-glucose = carminate + UDP + 2 H(+). The enzyme catalyses flavokermesate + UDP-alpha-D-glucose = flavokermesate 7-C-beta-D-glucoside + UDP + 2 H(+). In terms of biological role, membrane-bound UDP-glucosyltransferase (UGT) which catalyzes the C-glucosylation of kermesate and flavokermesate to produce carminate and flavokermesate 7-C-beta-D-glucoside (dcll) respectively. Carminate is used as a deterrent against insect predators. This is UDP-glucosyltransferase 2 from Dactylopius coccus (Cochineal).